Consider the following 172-residue polypeptide: Melanocortin-2 receptor accessory protein (172 aa).

A helical transmembrane segment spans residues 38–58 (IVIAFWVSLAAFVVLLFLILL). Disordered regions lie at residues 105 to 130 (QAQA…SSST) and 152 to 172 (PLVR…QLQS).

The protein belongs to the MRAP family. In terms of assembly, homodimer and heterodimer. Forms antiparallel homodimers and heterodimers with MRAP2. Interacts with MC1R, MC2R, MC3R, MC4R and MC5R.

The protein localises to the cell membrane. The protein resides in the endoplasmic reticulum membrane. In terms of biological role, modulator of melanocortin receptors (MC1R, MC2R, MC3R, MC4R and MC5R). Acts by increasing ligand-sensitivity of melanocortin receptors and enhancing generation of cAMP by the receptors. Required both for MC2R trafficking to the cell surface of adrenal cells and for signaling in response to corticotropin (ACTH). May be involved in the intracellular trafficking pathways in adipocyte cells. The chain is Melanocortin-2 receptor accessory protein (MRAP) from Pan troglodytes (Chimpanzee).